A 436-amino-acid polypeptide reads, in one-letter code: GTPase Der (436 aa).

2 consecutive EngA-type G domains span residues 4 to 167 and 176 to 351; these read PIVA…GEEE and IRLS…ENHK. GTP contacts are provided by residues 10-17, 57-61, 119-122, 182-189, 229-233, and 294-297; these read GRPNVGKS, DTGGI, NKVD, DTAGM, and NKWD. A KH-like domain is found at 352–436; it reads KRVQSSTLNE…PIHIIARKRN (85 aa).

This sequence belongs to the TRAFAC class TrmE-Era-EngA-EngB-Septin-like GTPase superfamily. EngA (Der) GTPase family. Associates with the 50S ribosomal subunit.

In terms of biological role, GTPase that plays an essential role in the late steps of ribosome biogenesis. This Staphylococcus aureus (strain USA300) protein is GTPase Der.